The primary structure comprises 366 residues: Ribosomal RNA large subunit methyltransferase M (366 aa).

Residues Ser188, 221 to 224 (CPGG), Asp240, Asp260, and Asp277 contribute to the S-adenosyl-L-methionine site. The Proton acceptor role is filled by Lys306.

This sequence belongs to the class I-like SAM-binding methyltransferase superfamily. RNA methyltransferase RlmE family. RlmM subfamily. Monomer.

The protein localises to the cytoplasm. It catalyses the reaction cytidine(2498) in 23S rRNA + S-adenosyl-L-methionine = 2'-O-methylcytidine(2498) in 23S rRNA + S-adenosyl-L-homocysteine + H(+). Its function is as follows. Catalyzes the 2'-O-methylation at nucleotide C2498 in 23S rRNA. The protein is Ribosomal RNA large subunit methyltransferase M of Salmonella arizonae (strain ATCC BAA-731 / CDC346-86 / RSK2980).